Consider the following 456-residue polypeptide: Phosphomethylpyrimidine synthase (456 aa).

Substrate is bound by residues asparagine 80, methionine 109, tyrosine 139, histidine 175, 195–197 (SRG), 236–239 (DSLR), and glutamate 275. Zn(2+) is bound at residue histidine 279. Tyrosine 302 is a substrate binding site. Residue histidine 343 coordinates Zn(2+). Residues cysteine 423, cysteine 426, and cysteine 431 each contribute to the [4Fe-4S] cluster site.

It belongs to the ThiC family. Requires [4Fe-4S] cluster as cofactor.

The catalysed reaction is 5-amino-1-(5-phospho-beta-D-ribosyl)imidazole + S-adenosyl-L-methionine = 4-amino-2-methyl-5-(phosphooxymethyl)pyrimidine + CO + 5'-deoxyadenosine + formate + L-methionine + 3 H(+). It participates in cofactor biosynthesis; thiamine diphosphate biosynthesis. In terms of biological role, catalyzes the synthesis of the hydroxymethylpyrimidine phosphate (HMP-P) moiety of thiamine from aminoimidazole ribotide (AIR) in a radical S-adenosyl-L-methionine (SAM)-dependent reaction. This is Phosphomethylpyrimidine synthase from Prochlorococcus marinus (strain MIT 9312).